Here is an 845-residue protein sequence, read N- to C-terminus: Nuclear pore complex protein Nup107 (845 aa).

Disordered regions lie at residues 1 to 26 (MADS…MPPQ) and 677 to 702 (QNRP…MASE). Composition is skewed to polar residues over residues 7 to 26 (PRSS…MPPQ) and 685 to 694 (TSHAASSQDN).

It belongs to the nucleoporin Nup84/Nup107 family. As to quaternary structure, part of the nuclear pore complex (NPC). Expressed in spermatocytes (at protein level).

It localises to the nucleus. It is found in the nuclear pore complex. The protein localises to the nucleus envelope. The protein resides in the nucleus membrane. Its subcellular location is the cytoplasm. It localises to the cytoskeleton. It is found in the spindle. The protein localises to the chromosome. The protein resides in the nucleus matrix. Its function is as follows. Plays a role in nuclear pore complex (NPC) assembly and maintenance. Required for nuclear import of Mad. Mediates the association between the nuclear pore complex and a subset of active chromatin regions adjacent to lamin-associated domains. Plays a role in double strand break repair by relocalizing the heterochromatic double strand breaks (DSBs) to the nuclear periphery as part of the homologous recombination (HR) repair process. Regulates cytokinesis during spermatocyte meiosis by maintaining type-B lamin Lam localization to the spindle envelope. Regulates female gonad development and oogenesis. The sequence is that of Nuclear pore complex protein Nup107 from Drosophila melanogaster (Fruit fly).